The sequence spans 813 residues: Kinesin-like protein KIN-8B (813 aa).

In terms of domain architecture, Kinesin motor spans 14–345; sequence TLTVAVKCRP…LKYADRAKEI (332 aa). 104–111 contacts ATP; sequence GSTGSGKT. Positions 349–391 form a coiled coil; that stretch reads IQKNIGTIDTHMSDYQRMIDNLQSEVSQLKTQLAEKESQLSIK. Disordered stretches follow at residues 664 to 694 and 756 to 813; these read GSRPASRIDTGGNHRRVSYPQTVNNSSPRMA and AVST…RQHQ. 3 stretches are compositionally biased toward polar residues: residues 682-694, 761-791, and 804-813; these read YPQTVNNSSPRMA, GARNQQRVFGTSPLSGTKGVKNSSYGQNSHT, and KGNNTQRQHQ.

It belongs to the TRAFAC class myosin-kinesin ATPase superfamily. Kinesin family. KIN-8 subfamily.

This chain is Kinesin-like protein KIN-8B, found in Arabidopsis thaliana (Mouse-ear cress).